The following is a 370-amino-acid chain: Glycerophosphodiester phosphodiesterase GDPD3 (370 aa).

Positions 35–322 (FVLMGHRGFG…DMVKDISEAI (288 aa)) constitute a GP-PDE domain.

The protein belongs to the glycerophosphoryl diester phosphodiesterase family. In terms of tissue distribution, expressed in flowers and siliques.

It catalyses the reaction a sn-glycero-3-phosphodiester + H2O = an alcohol + sn-glycerol 3-phosphate + H(+). This is Glycerophosphodiester phosphodiesterase GDPD3 from Arabidopsis thaliana (Mouse-ear cress).